Here is a 391-residue protein sequence, read N- to C-terminus: Zinc finger protein ubi-d4 (391 aa).

Ala-2 is modified (N-acetylalanine). Residues Lys-10, Lys-99, Lys-107, and Lys-108 each participate in a glycyl lysine isopeptide (Lys-Gly) (interchain with G-Cter in SUMO2) cross-link. Disordered stretches follow at residues 79–147 (WRKK…GEFP) and 165–199 (DDLD…KLDA). 2 stretches are compositionally biased toward basic and acidic residues: residues 100–110 (PDTDQTLKKEG) and 126–140 (DPLE…RVDD). Ser-142 is modified (phosphoserine). The segment covering 165-174 (DDLDDEDYEE) has biased composition (acidic residues). A Phosphotyrosine modification is found at Tyr-172. Thr-176 carries the phosphothreonine modification. Residues Lys-178 and Lys-196 each participate in a glycyl lysine isopeptide (Lys-Gly) (interchain with G-Cter in SUMO2) cross-link. A Phosphoserine modification is found at Ser-200. The C2H2-type zinc-finger motif lies at 209 to 232 (YACDICGKRYKNRPGLSYHYAHSH). Residues 233 to 266 (LAEEEGEDKEDSRPPTPVSQRSEEQKSKKGPDGL) form a disordered region. A Phosphoserine modification is found at Ser-244. The span at 253–263 (RSEEQKSKKGP) shows a compositional bias: basic and acidic residues. 2 consecutive PHD-type zinc fingers follow at residues 270 to 330 (NNYC…CKCC) and 327 to 377 (CKCC…CLDL). Ser-280 is subject to Phosphoserine. A Glycyl lysine isopeptide (Lys-Gly) (interchain with G-Cter in SUMO2) cross-link involves residue Lys-281.

This sequence belongs to the requiem/DPF family. In terms of assembly, interacts with the nucleosomes, in particular nucleosomes bearing histone H3 crotonylated at 'Lys-14' (H3K14cr) for which DPF2 has high affinity. Also interacts (via PHD-type zinc finger domains) with histone H3 butyrylated at 'Lys-14' (H3K14bu), histone H3 propionylated at 'Lys-14' (H3K14pr), and histone H3 acetylated at 'Lys-14' (H3K14ac). Interacts with histone H3 acetylated at 'Lys-9' (H3K9ac), histone H3 di-methylated at 'Lys-9' (H3K9me2), and histone H3 tri-methylated at 'Lys-9' (H3K9me3). Interacts with histone H4 acetylated at 'Lys-12' (H4K12ac). Interacts with histone H4 acetylated at 'Lys-16' (H4K16ac). Interacts with SWI/SNF complex components. Interacts with SMARCA2, SMARCA4, SMARCB1 and SMARCD1. Interacts with SMARCC1, SMARCC2 and ACTL6A. Interacts with RUNX1. In terms of tissue distribution, in embryo, highest levels are seen in brain, eyes, thymus and olfactory epithelium in nose, whereas several other tissues, including the musculoskeletal system, show moderate expression. In adult, higher expression in testis, medium in thymus and spleen, lower in certain parts of the brain as the hippocampus. No expression in adult heart, lung, liver, duodenum and kidney.

The protein localises to the nucleus. Its subcellular location is the cytoplasm. Its function is as follows. Plays an active role in transcriptional regulation by binding modified histones H3 and H4. Is a negative regulator of myeloid differentiation of hematopoietic progenitor cells. Might also have a role in the development and maturation of lymphoid cells. Involved in the regulation of non-canonical NF-kappa-B pathway. The sequence is that of Zinc finger protein ubi-d4 (Dpf2) from Mus musculus (Mouse).